A 627-amino-acid chain; its full sequence is DNA mismatch repair protein MutL (627 aa).

The disordered stretch occupies residues 363-397 (FAEPAAREPVAPRYSPAPASGSRPAAPWPNAQPGY). Residues 364–387 (AEPAAREPVAPRYSPAPASGSRPA) are compositionally biased toward low complexity.

The protein belongs to the DNA mismatch repair MutL/HexB family.

Its function is as follows. This protein is involved in the repair of mismatches in DNA. It is required for dam-dependent methyl-directed DNA mismatch repair. May act as a 'molecular matchmaker', a protein that promotes the formation of a stable complex between two or more DNA-binding proteins in an ATP-dependent manner without itself being part of a final effector complex. This is DNA mismatch repair protein MutL from Shigella flexneri serotype 5b (strain 8401).